The sequence spans 168 residues: Protein GRE1 (168 aa).

A disordered region spans residues 1 to 168; sequence MSNLLNKFAD…DDDSGNQGVW (168 aa). Composition is skewed to basic and acidic residues over residues 8–20 and 27–43; these read FADKLHGNDHDER and DQTRQQRHEKHQQREFR. Polar residues-rich tracts occupy residues 56 to 81 and 120 to 144; these read NQGNFPQRQQPQSNLGGNTQFGGNDF and TSGQQQKQGRTRGAQSNRYQSSNIG.

It is found in the cytoplasm. The polypeptide is Protein GRE1 (GRE1) (Saccharomyces cerevisiae (strain ATCC 204508 / S288c) (Baker's yeast)).